The chain runs to 82 residues: Small ribosomal subunit protein uS17 (82 aa).

It belongs to the universal ribosomal protein uS17 family. As to quaternary structure, part of the 30S ribosomal subunit.

In terms of biological role, one of the primary rRNA binding proteins, it binds specifically to the 5'-end of 16S ribosomal RNA. The polypeptide is Small ribosomal subunit protein uS17 (Shewanella woodyi (strain ATCC 51908 / MS32)).